The primary structure comprises 1436 residues: MAP kinase kinase kinase win1 (1436 aa).

The segment at 56 to 85 is disordered; sequence LELPNNGKEENHRRPSVARSSSDRSKASAK. Residues 76-85 are compositionally biased toward basic and acidic residues; that stretch reads SSDRSKASAK. Position 224 is a phosphoserine (serine 224). Threonine 226 carries the post-translational modification Phosphothreonine. Residues 282–1123 form an interaction with tea4 region; it reads EDSDLDSETS…SNITIRWQQG (842 aa). In terms of domain architecture, Protein kinase spans 1120-1406; the sequence is WQQGGLIGSG…AAELLMDPWV (287 aa). ATP-binding positions include 1126-1134 and lysine 1149; that span reads IGSGSFGTV. Catalysis depends on aspartate 1244, which acts as the Proton acceptor.

Belongs to the protein kinase superfamily. STE Ser/Thr protein kinase family. MAP kinase kinase kinase subfamily. Interacts with tea4.

It carries out the reaction L-seryl-[protein] + ATP = O-phospho-L-seryl-[protein] + ADP + H(+). The enzyme catalyses L-threonyl-[protein] + ATP = O-phospho-L-threonyl-[protein] + ADP + H(+). Involved in a signal transduction pathway that is activated by changes in the osmolarity of the extracellular environment. Activates the wis1 MAP kinase kinase by phosphorylation. This Schizosaccharomyces pombe (strain 972 / ATCC 24843) (Fission yeast) protein is MAP kinase kinase kinase win1 (win1).